The sequence spans 782 residues: Endonuclease MutS2 (782 aa).

336–343 serves as a coordination point for ATP; that stretch reads GPNTGGKT. One can recognise a Smr domain in the interval 707–782; the sequence is LDLRGYRYED…GFGVTVATLK (76 aa).

Belongs to the DNA mismatch repair MutS family. MutS2 subfamily. Homodimer. Binds to stalled ribosomes, contacting rRNA.

In terms of biological role, endonuclease that is involved in the suppression of homologous recombination and thus may have a key role in the control of bacterial genetic diversity. Acts as a ribosome collision sensor, splitting the ribosome into its 2 subunits. Detects stalled/collided 70S ribosomes which it binds and splits by an ATP-hydrolysis driven conformational change. Acts upstream of the ribosome quality control system (RQC), a ribosome-associated complex that mediates the extraction of incompletely synthesized nascent chains from stalled ribosomes and their subsequent degradation. Probably generates substrates for RQC. This Staphylococcus aureus (strain COL) protein is Endonuclease MutS2.